Consider the following 1045-residue polypeptide: Mitotic deacetylase-associated SANT domain protein (1045 aa).

Methionine 1 carries the N-acetylmethionine modification. 2 disordered regions span residues 1–68 (MNLQ…PPPS) and 99–159 (NSVM…PTYY). Positions 132 to 146 (STWNCHSLSLYSATK) are enriched in polar residues. Lysine 166 participates in a covalent cross-link: Glycyl lysine isopeptide (Lys-Gly) (interchain with G-Cter in SUMO2). Asymmetric dimethylarginine is present on arginine 193. Disordered regions lie at residues 228-264 (QVFR…QQAA), 276-305 (SMPQ…AHHS), 330-349 (APQP…SRRL), 378-397 (HHWP…HPEA), and 410-441 (LPDG…STGD). The segment covering 240–264 (VAAFPPQKQQQQQQPQQQQQQQQAA) has biased composition (low complexity). Over residues 412–425 (DGERLAPNGREREA) the composition is skewed to basic and acidic residues. Arginine 447 is modified (omega-N-methylarginine). Residue serine 461 is modified to Phosphoserine. Residues 543 to 563 (QAGGLDEDGKGPEQNPAEHKP) are disordered. The span at 549–563 (EDGKGPEQNPAEHKP) shows a compositional bias: basic and acidic residues. Lysine 590 participates in a covalent cross-link: Glycyl lysine isopeptide (Lys-Gly) (interchain with G-Cter in SUMO1); alternate. Residue lysine 590 forms a Glycyl lysine isopeptide (Lys-Gly) (interchain with G-Cter in SUMO2); alternate linkage. The residue at position 655 (threonine 655) is a Phosphothreonine. Residue serine 661 is modified to Phosphoserine. Residue threonine 704 is modified to Phosphothreonine. At serine 709 the chain carries Phosphoserine. Threonine 715 bears the Phosphothreonine mark. The 93-residue stretch at 721–813 (PRINVGSRFQ…ETLNKLLLKK (93 aa)) folds into the ELM2 domain. Residues 828–879 (TGSDQWKMAERKLFNKGIAIYKKDFFLVQKLIQTKTVAQCVEFYYTYKKQVK) form the SANT domain. The segment at 887–1045 (TFGDVDTSDE…NTFPCKKCGR (159 aa)) is disordered. Composition is skewed to basic and acidic residues over residues 894 to 909 (SDEK…DIKT) and 919 to 942 (PRRE…RKEG). Serine 923 is subject to Phosphoserine. Over residues 943-957 (EEEVPEIQEKEEQEE) the composition is skewed to acidic residues. Residues 970–980 (ATQTLQANESA) are compositionally biased toward polar residues.

In terms of assembly, interacts with DNTTIP1. Identified in a histone deacetylase complex that contains DNTTIP1, HDAC1 and MIDEAS; this complex assembles into a tetramer that contains four copies of each protein chain.

The protein localises to the nucleus. The polypeptide is Mitotic deacetylase-associated SANT domain protein (Homo sapiens (Human)).